The primary structure comprises 642 residues: Threonine--tRNA ligase (642 aa).

The 61-residue stretch at 1-61 (MPVITLPDGS…ENDATLAIIT (61 aa)) folds into the TGS domain. The segment at 243–534 (DHRKIGKQLD…LTEEFAGFFP (292 aa)) is catalytic. The Zn(2+) site is built by Cys334, His385, and His511.

The protein belongs to the class-II aminoacyl-tRNA synthetase family. In terms of assembly, homodimer. It depends on Zn(2+) as a cofactor.

It localises to the cytoplasm. The enzyme catalyses tRNA(Thr) + L-threonine + ATP = L-threonyl-tRNA(Thr) + AMP + diphosphate + H(+). Catalyzes the attachment of threonine to tRNA(Thr) in a two-step reaction: L-threonine is first activated by ATP to form Thr-AMP and then transferred to the acceptor end of tRNA(Thr). Also edits incorrectly charged L-seryl-tRNA(Thr). The sequence is that of Threonine--tRNA ligase from Salmonella dublin (strain CT_02021853).